We begin with the raw amino-acid sequence, 91 residues long: Putative regulatory protein DSY2730 (91 aa).

The protein belongs to the RemA family.

The protein is Putative regulatory protein DSY2730 of Desulfitobacterium hafniense (strain Y51).